The primary structure comprises 1297 residues: Phosphoribosylformylglycinamidine synthase (1297 aa).

Residues 301-329 (TAISPFPGAATGSGGEIRDEGATGRGAKP) are disordered. 308 to 319 (GAATGSGGEIRD) contacts ATP. Residues Asp680, Glu719, Asn723, and Asp887 each contribute to the Mg(2+) site. An ATP-binding site is contributed by Ser889. Residues 1045 to 1297 (IAILREQGVN…RLFRNARMVF (253 aa)) form the Glutamine amidotransferase type-1 domain. Cys1138 functions as the Nucleophile in the catalytic mechanism. Residues His1263 and Glu1265 contribute to the active site.

In the N-terminal section; belongs to the FGAMS family. Monomer.

The protein resides in the cytoplasm. The enzyme catalyses N(2)-formyl-N(1)-(5-phospho-beta-D-ribosyl)glycinamide + L-glutamine + ATP + H2O = 2-formamido-N(1)-(5-O-phospho-beta-D-ribosyl)acetamidine + L-glutamate + ADP + phosphate + H(+). Its pathway is purine metabolism; IMP biosynthesis via de novo pathway; 5-amino-1-(5-phospho-D-ribosyl)imidazole from N(2)-formyl-N(1)-(5-phospho-D-ribosyl)glycinamide: step 1/2. In terms of biological role, phosphoribosylformylglycinamidine synthase involved in the purines biosynthetic pathway. Catalyzes the ATP-dependent conversion of formylglycinamide ribonucleotide (FGAR) and glutamine to yield formylglycinamidine ribonucleotide (FGAM) and glutamate. This chain is Phosphoribosylformylglycinamidine synthase, found in Haemophilus influenzae (strain ATCC 51907 / DSM 11121 / KW20 / Rd).